A 393-amino-acid polypeptide reads, in one-letter code: Pre-mRNA-splicing regulator WTAP (393 aa).

A disordered region spans residues 240–393 (QQQIQTSGNR…SSVNVQGSVL (154 aa)). Residues 254–267 (ESKDEGETSGKDCG) show a composition bias toward basic and acidic residues. The segment covering 272-286 (GPSNGGSSHQRTHSS) has biased composition (polar residues). Basic and acidic residues predominate over residues 310–319 (LPNHSEERTS). Polar residues predominate over residues 320 to 353 (RGGSSYMNQLSTGYESVDSPTGSENSLTHQSNDT). The segment covering 354-365 (DSNHDSQEEKPV) has biased composition (basic and acidic residues). Polar residues predominate over residues 369 to 393 (GNRTVSSRHLQNGLDSSVNVQGSVL).

Belongs to the fl(2)d family. As to quaternary structure, component of the WMM complex, a N6-methyltransferase complex composed of a catalytic subcomplex, named MAC, and of an associated subcomplex, named MACOM. Component of the MACOM subcomplex.

It localises to the nucleus speckle. It is found in the nucleus. The protein resides in the nucleoplasm. Functionally, associated component of the WMM complex, a complex that mediates N6-methyladenosine (m6A) methylation of RNAs, a modification that plays a role in the efficiency of mRNA splicing and RNA processing. This is Pre-mRNA-splicing regulator WTAP from Xenopus tropicalis (Western clawed frog).